An 88-amino-acid polypeptide reads, in one-letter code: MAASRLPPAALTLKQFMRRQQVLLLYRKILRAIRQVPSDSDRKYLQDWAREEFKRNKSATEEDTIRMMITQGNMQLKELERTLALANS.

The transit peptide at 1 to 19 directs the protein to the mitochondrion; the sequence is MAASRLPPAALTLKQFMRR.

It belongs to the complex I LYR family.

It is found in the mitochondrion. Its function is as follows. Involved in efficient integration of the N-module into mitochondrial respiratory chain complex I. The protein is LYR motif-containing protein 2 (Lyrm2) of Mus musculus (Mouse).